The chain runs to 490 residues: Cobyric acid synthase (490 aa).

The GATase cobBQ-type domain occupies 252–439; the sequence is RLKVVVPVLP…LHGLFESTAA (188 aa). Cys-333 functions as the Nucleophile in the catalytic mechanism. His-431 is an active-site residue.

The protein belongs to the CobB/CobQ family. CobQ subfamily.

It functions in the pathway cofactor biosynthesis; adenosylcobalamin biosynthesis. Functionally, catalyzes amidations at positions B, D, E, and G on adenosylcobyrinic A,C-diamide. NH(2) groups are provided by glutamine, and one molecule of ATP is hydrogenolyzed for each amidation. This is Cobyric acid synthase from Pseudomonas aeruginosa (strain UCBPP-PA14).